The chain runs to 227 residues: Cytochrome c oxidase subunit 2 (227 aa).

Residues 1–14 are Mitochondrial intermembrane-facing; that stretch reads MAYPVQLGFQDAAS. Residues 15 to 45 form a helical membrane-spanning segment; that stretch reads PIMEELLYFHDHTLMIVFLISSLVLYIISLM. Residues 46 to 59 lie on the Mitochondrial matrix side of the membrane; that stretch reads LTTKLMHTSTMDAQ. A helical membrane pass occupies residues 60-87; it reads EVETVWTILPAIILILIALPSLRILYMM. Residues 88–227 are Mitochondrial intermembrane-facing; that stretch reads DEITTPSLTL…HFEEWLLSMF (140 aa). His161, Cys196, Glu198, Cys200, His204, and Met207 together coordinate Cu cation. Mg(2+) is bound at residue Glu198.

Belongs to the cytochrome c oxidase subunit 2 family. As to quaternary structure, component of the cytochrome c oxidase (complex IV, CIV), a multisubunit enzyme composed of 14 subunits. The complex is composed of a catalytic core of 3 subunits MT-CO1, MT-CO2 and MT-CO3, encoded in the mitochondrial DNA, and 11 supernumerary subunits COX4I, COX5A, COX5B, COX6A, COX6B, COX6C, COX7A, COX7B, COX7C, COX8 and NDUFA4, which are encoded in the nuclear genome. The complex exists as a monomer or a dimer and forms supercomplexes (SCs) in the inner mitochondrial membrane with NADH-ubiquinone oxidoreductase (complex I, CI) and ubiquinol-cytochrome c oxidoreductase (cytochrome b-c1 complex, complex III, CIII), resulting in different assemblies (supercomplex SCI(1)III(2)IV(1) and megacomplex MCI(2)III(2)IV(2)). Found in a complex with TMEM177, COA6, COX18, COX20, SCO1 and SCO2. Interacts with TMEM177 in a COX20-dependent manner. Interacts with COX20. Interacts with COX16. Cu cation is required as a cofactor.

The protein resides in the mitochondrion inner membrane. The catalysed reaction is 4 Fe(II)-[cytochrome c] + O2 + 8 H(+)(in) = 4 Fe(III)-[cytochrome c] + 2 H2O + 4 H(+)(out). Its function is as follows. Component of the cytochrome c oxidase, the last enzyme in the mitochondrial electron transport chain which drives oxidative phosphorylation. The respiratory chain contains 3 multisubunit complexes succinate dehydrogenase (complex II, CII), ubiquinol-cytochrome c oxidoreductase (cytochrome b-c1 complex, complex III, CIII) and cytochrome c oxidase (complex IV, CIV), that cooperate to transfer electrons derived from NADH and succinate to molecular oxygen, creating an electrochemical gradient over the inner membrane that drives transmembrane transport and the ATP synthase. Cytochrome c oxidase is the component of the respiratory chain that catalyzes the reduction of oxygen to water. Electrons originating from reduced cytochrome c in the intermembrane space (IMS) are transferred via the dinuclear copper A center (CU(A)) of subunit 2 and heme A of subunit 1 to the active site in subunit 1, a binuclear center (BNC) formed by heme A3 and copper B (CU(B)). The BNC reduces molecular oxygen to 2 water molecules using 4 electrons from cytochrome c in the IMS and 4 protons from the mitochondrial matrix. The protein is Cytochrome c oxidase subunit 2 (MT-CO2) of Propithecus tattersalli (Golden-crowned Sifaka).